We begin with the raw amino-acid sequence, 689 residues long: Beta-adrenergic receptor kinase 1 (689 aa).

The interval 1 to 190 is N-terminal; it reads MADLEAVLAD…ELNIHLTMND (190 aa). Positions 54 to 175 constitute an RGS domain; the sequence is TFEKIFSQKL…IESDKFTRFC (122 aa). Residues 191 to 453 form the Protein kinase domain; that stretch reads FSVHRIIGRG…AQEIKESPFF (263 aa). ATP-binding positions include 197 to 205 and K220; that span reads IGRGGFGEV. D317 functions as the Proton acceptor in the catalytic mechanism. Residues 454–521 form the AGC-kinase C-terminal domain; sequence RSLDWQMVFL…TISERWQQEV (68 aa). The region spanning 558 to 652 is the PH domain; the sequence is DCIMHGYMSK…WKKELRDAYR (95 aa). The residue at position 670 (S670) is a Phosphoserine.

The protein belongs to the protein kinase superfamily. AGC Ser/Thr protein kinase family. GPRK subfamily. As to quaternary structure, interacts with the heterodimer formed by GNB1 and GNG2. Interacts with GIT1. Interacts with, and phosphorylates chemokine-stimulated CCR5. Interacts with ARRB1. Interacts with LPAR1 and LPAR2. Interacts with RALA in response to LPAR1 activation. ADRBK1 and RALA mutually inhibit each other's binding to LPAR1. Interacts with ADRB2. As to expression, expressed at low levels in brain cortex, hippocampus, striatum, hypothalamus, cerebellum and brainstem (at protein level).

The protein localises to the cytoplasm. It is found in the cell membrane. It localises to the postsynapse. The protein resides in the presynapse. It carries out the reaction [beta-adrenergic receptor] + ATP = [beta-adrenergic receptor]-phosphate + ADP + H(+). Its activity is regulated as follows. In contrast to other AGC family kinases, the catalytic activity is solely regulated by the binding of substrates and ligands, not by phosphorylation of the kinase domain. Functionally, specifically phosphorylates the agonist-occupied form of the beta-adrenergic and closely related receptors, probably inducing a desensitization of them. Key regulator of LPAR1 signaling. Competes with RALA for binding to LPAR1 thus affecting the signaling properties of the receptor. Desensitizes LPAR1 and LPAR2 in a phosphorylation-independent manner. Positively regulates ciliary smoothened (SMO)-dependent Hedgehog (Hh) signaling pathway by facilitating the trafficking of SMO into the cilium and the stimulation of SMO activity. Inhibits relaxation of airway smooth muscle in response to blue light. This is Beta-adrenergic receptor kinase 1 from Rattus norvegicus (Rat).